The sequence spans 222 residues: Putative germin-like protein 3-2 (222 aa).

The N-terminal stretch at 1–22 (MAKLILATFAVVFLALAATSLA) is a signal peptide. The cysteines at positions 32 and 50 are disulfide-linked. 2 N-linked (GlcNAc...) asparagine glycosylation sites follow: asparagine 55 and asparagine 71. The region spanning 64 to 212 (DGLTNAGNTT…AFQVDGGMVE (149 aa)) is the Cupin type-1 domain. Histidine 112, histidine 114, glutamate 119, and histidine 158 together coordinate Mn(2+). Residue asparagine 165 is glycosylated (N-linked (GlcNAc...) asparagine).

It belongs to the germin family. Oligomer (believed to be a pentamer but probably hexamer).

It localises to the secreted. Its subcellular location is the extracellular space. The protein resides in the apoplast. May play a role in plant defense. Probably has no oxalate oxidase activity even if the active site is conserved. In Oryza sativa subsp. japonica (Rice), this protein is Putative germin-like protein 3-2.